A 170-amino-acid polypeptide reads, in one-letter code: Adenine phosphoribosyltransferase (170 aa).

The protein belongs to the purine/pyrimidine phosphoribosyltransferase family. Homodimer.

The protein localises to the cytoplasm. It catalyses the reaction AMP + diphosphate = 5-phospho-alpha-D-ribose 1-diphosphate + adenine. The protein operates within purine metabolism; AMP biosynthesis via salvage pathway; AMP from adenine: step 1/1. In terms of biological role, catalyzes a salvage reaction resulting in the formation of AMP, that is energically less costly than de novo synthesis. The polypeptide is Adenine phosphoribosyltransferase (Nitrosopumilus maritimus (strain SCM1)).